We begin with the raw amino-acid sequence, 132 residues long: MISITEWQKIGVGTTGFGIFFILFGMLLYFDSVLLAFGNLLFLTGLSLIIGLRRTFSFFFQRHKFKGTSFFLGGVVIVLLRWPLLGMCLETYGFFSLFRGFFPVAFGFLGSASNIPFLSALFQRLQGTSSMV.

Residues 1 to 16 lie on the Cytoplasmic side of the membrane; that stretch reads MISITEWQKIGVGTTG. A helical membrane pass occupies residues 17–37; sequence FGIFFILFGMLLYFDSVLLAF. Topologically, residues 38–39 are lumenal; sequence GN. Residues 40 to 60 traverse the membrane as a helical segment; that stretch reads LLFLTGLSLIIGLRRTFSFFF. Over 61–68 the chain is Cytoplasmic; it reads QRHKFKGT. Residues 69 to 89 form a helical membrane-spanning segment; the sequence is SFFLGGVVIVLLRWPLLGMCL. At 90–100 the chain is on the lumenal side; sequence ETYGFFSLFRG. A helical transmembrane segment spans residues 101–121; the sequence is FFPVAFGFLGSASNIPFLSAL. Residues 122-132 lie on the Cytoplasmic side of the membrane; it reads FQRLQGTSSMV.

It belongs to the GOT1 family.

The protein resides in the golgi apparatus membrane. In terms of biological role, may be involved in fusion of ER-derived transport vesicles with the Golgi complex. This Bos taurus (Bovine) protein is Vesicle transport protein GOT1A.